Consider the following 717-residue polypeptide: DNA-directed RNA polymerase subunit beta' (717 aa).

4 residues coordinate Zn(2+): cysteine 71, cysteine 73, cysteine 91, and cysteine 94. Residues aspartate 481, aspartate 483, and aspartate 485 each contribute to the Mg(2+) site.

Belongs to the RNA polymerase beta' chain family. RpoC1 subfamily. As to quaternary structure, in plastids the minimal PEP RNA polymerase catalytic core is composed of four subunits: alpha, beta, beta', and beta''. When a (nuclear-encoded) sigma factor is associated with the core the holoenzyme is formed, which can initiate transcription. Requires Mg(2+) as cofactor. The cofactor is Zn(2+).

The protein resides in the plastid. It localises to the chloroplast. It catalyses the reaction RNA(n) + a ribonucleoside 5'-triphosphate = RNA(n+1) + diphosphate. In terms of biological role, DNA-dependent RNA polymerase catalyzes the transcription of DNA into RNA using the four ribonucleoside triphosphates as substrates. This Chlorokybus atmophyticus (Soil alga) protein is DNA-directed RNA polymerase subunit beta'.